Here is a 585-residue protein sequence, read N- to C-terminus: Mitochondrial sodium/calcium exchanger protein (585 aa).

An N-terminal signal peptide occupies residues 1–26; the sequence is MASRWLALLWAPVFLCVALILETASG. The Extracellular portion of the chain corresponds to 27–95; that stretch reads TGDPSTKAHG…GIFCYFPPNL (69 aa). Asn46 carries an N-linked (GlcNAc...) asparagine glycan. The helical transmembrane segment at 96-116 threads the bilayer; that stretch reads LPLAITLYVFWLLYLFLILGV. Over 117 to 140 the chain is Cytoplasmic; the sequence is TAAKFFCPNLSAISTNLKLSHNVA. Residues 141-161 traverse the membrane as a helical segment; that stretch reads GVTFLAFGNGAPDIFSALVAF. Topologically, residues 162–168 are extracellular; it reads SDPRTAG. Residues 169 to 189 form a helical membrane-spanning segment; sequence LAIGALFGAGVLVTTVVAGGI. Topologically, residues 190-205 are cytoplasmic; that stretch reads TILHPFMAASRPFLRD. Residues 206–226 form a helical membrane-spanning segment; sequence IAFYMVAVFLTFTALYLGRIT. Residues 227–229 are Extracellular-facing; the sequence is LTW. Residues 230 to 250 form a helical membrane-spanning segment; sequence ALGYLGLYVFYVVTVIICTWV. Residues 251–325 are Cytoplasmic-facing; the sequence is YQRQRSRSLV…KWRTQSISWR (75 aa). Ser258 carries the post-translational modification Phosphoserine; by PKA. A helical membrane pass occupies residues 326–346; sequence VLKVVKLPVEFLLLLTVPVVD. The Extracellular segment spans residues 347 to 360; it reads PDKDDRNWKRPLNC. The chain crosses the membrane as a helical span at residues 361-381; the sequence is LQLVISPLVLVLTLQSGVYGI. Over 382-383 the chain is Cytoplasmic; sequence YE. Residues 384 to 404 traverse the membrane as a helical segment; sequence IGGLLPVWAVVVIVGTALASV. Residues 405–416 are Extracellular-facing; it reads TFFATSNREPPR. Residues 417–437 form a helical membrane-spanning segment; it reads LHWLFAFLGFLTSALWINAAA. Topologically, residues 438–445 are cytoplasmic; sequence TEVVNILR. A helical membrane pass occupies residues 446–466; sequence SLGVIFRLSNTVLGLTLLAWG. At 467-491 the chain is on the extracellular side; the sequence is NSIGDAFSDFTLARQGYPRMAFSAC. Residues 492-512 traverse the membrane as a helical segment; it reads FGGIIFNILVGVGLGCLLQII. The Cytoplasmic segment spans residues 513 to 525; it reads RNHVVEVKLEPDG. The chain crosses the membrane as a helical span at residues 526-546; it reads LLVWVLASALGLSLIFSLVSV. Over 547-559 the chain is Extracellular; that stretch reads PLQCFQLSKAYGL. The helical transmembrane segment at 560–580 threads the bilayer; sequence CLLLFYICFLVVVLLTEFGVI. Over 581–585 the chain is Cytoplasmic; it reads HLKKA.

It belongs to the Ca(2+):cation antiporter (CaCA) (TC 2.A.19) family. SLC24A subfamily. In terms of processing, phosphorylation at Ser-258 by PKA prevents calcium overload. As to expression, ubiquitously expressed. Expressed in dental tissues.

The protein resides in the mitochondrion inner membrane. It is found in the cell membrane. It catalyses the reaction Ca(2+)(in) + 3 Na(+)(out) = Ca(2+)(out) + 3 Na(+)(in). The enzyme catalyses 3 Li(+)(out) + Ca(2+)(in) = 3 Li(+)(in) + Ca(2+)(out). Inhibited by the sodium/calcium exchanger inhibitor CGP-37157. Strongly inhibited by zinc. Mitochondrial sodium/calcium antiporter that mediates sodium-dependent calcium efflux from mitochondrion, by mediating the exchange of 3 sodium ions per 1 calcium ion. Plays a central role in mitochondrial calcium homeostasis by mediating mitochondrial calcium extrusion: calcium efflux is essential for mitochondrial function and cell survival, notably in cardiomyocytes. Regulates rates of glucose-dependent insulin secretion in pancreatic beta-cells during the first phase of insulin secretion: acts by mediating efflux of calcium from mitochondrion, thereby affecting cytoplasmic calcium responses. Required for store-operated Ca(2+) entry (SOCE) and Ca(2+) release-activated Ca(2+) (CRAC) channel regulation: sodium transport by SLC8B1 leads to promote calcium-shuttling that modulates mitochondrial redox status, thereby regulating SOCE activity. Involved in B-lymphocyte chemotaxis. Able to transport Ca(2+) in exchange of either Li(+) or Na(+), explaining how Li(+) catalyzes Ca(2+) exchange. In contrast to other members of the family its function is independent of K(+). This Mus musculus (Mouse) protein is Mitochondrial sodium/calcium exchanger protein.